We begin with the raw amino-acid sequence, 333 residues long: MVFRSPLDLYSSHFLLPNFADSHHCSLLLASSGGGSGASGGGGGAGGGGGGNRAGGGGAGGAGGGSGGGGSRAPPEELSMFQLPTLNFSPEQVASVCETLEETGDIERLGRFLWSLPVAPGACEAINKHESILRARAVVAFHTGNFRDLYHILENHKFTKESHGKLQAMWLEAHYQEAEKLRGRPLGPVDKYRVRKKFPLPRTIWDGEQKTHCFKERTRSLLREWYLQDPYPNPSKKRELAQATGLTPTQVGNWFKNRRQRDRAAAAKNRLQHQAIGPSGMRSLAEPGCPTHGSAESPSTAASPTTSVSSLTERADTGTSILSVTSSDSECDV.

The segment covering 57-71 (GGAGGAGGGSGGGGS) has biased composition (gly residues). Disordered stretches follow at residues 57–76 (GGAG…APPE), 233–252 (NPSK…TQVG), and 259–333 (RQRD…ECDV). The tract at residues 73 to 120 (APPEELSMFQLPTLNFSPEQVASVCETLEETGDIERLGRFLWSLPVAP) is interaction with TLE5. The segment at residues 207–266 (GEQKTHCFKERTRSLLREWYLQDPYPNPSKKRELAQATGLTPTQVGNWFKNRRQRDRAAA) is a DNA-binding region (homeobox). The bind to RHO promoter stretch occupies residues 233-235 (NPS). The segment covering 294–310 (SAESPSTAASPTTSVSS) has biased composition (low complexity). Over residues 317–333 (TGTSILSVTSSDSECDV) the composition is skewed to polar residues.

It belongs to the SIX/Sine oculis homeobox family. In terms of assembly, interacts with EYA4; translocates EYA4 from the cytoplasm to the nucleus and promotes activation of their target genes. Interacts with MTA1 and HDAC2; represses its own transcription. Interacts with MTA1; facilitates the binding of SIX3 to the core DNA motif of SIX3 promoter. Interacts with EYA1; promotes EYA1 translocation to the nucleus. Interacts with TLE1 and TLE5 (via Q domain); can act in combination with either TLE1 and/or TLE5 leading to transcriptional repression or activation, respectively. Interacts (via homeobox) with NR4A3; differentially regulates the transcriptional activities NR4A3. Interacts with GMNN. Interacts with TLE4. As to expression, expressed in ependymal cells during the formation of the lateral wall.

Its subcellular location is the nucleus. Transcriptional regulator which can act as both a transcriptional repressor and activator by binding a ATTA homeodomain core recognition sequence on these target genes. During forebrain development represses WNT1 expression allowing zona limitans intrathalamica formation and thereby ensuring proper anterio-posterior patterning of the diencephalon and formation of the rostral diencephalon. Acts as a direct upstream activator of SHH expression in the rostral diencephalon ventral midline and that in turn SHH maintains its expression. In addition, Six3 activity is required for the formation of the telencephalon. During postnatal stages of brain development is necessary for ependymal cell maturation by promoting the maturation of radial glia into ependymal cells through regulation of neuroblast proliferation and migration. Acts on the proliferation and differentiation of neural progenitor cells through activating transcription of CCND1 AND CCND2. During early lens formation plays a role in lens induction and specification by activating directly PAX6 in the presumptive lens ectoderm. In turn PAX6 activates SIX3 resulting in activation of PDGFRA and CCND1 promoting cell proliferation. Also is required for the neuroretina development by directly suppressing WNT8B expression in the anterior neural plate territory. Its action during retina development and lens morphogenesis is TLE5 and TLE4-dependent manner. Furthermore, during eye development regulates several genes expression. Before and during early lens development represses the CRYGF promoter by binding a SIX repressor element. Directly activates RHO transcription, or cooperates with CRX or NRL. Six3 also functions in the formation of the proximodistal axis of the optic cup, and promotes the formation of optic vesicles-like structures. During pituitary development, acts in parallel or alternatively with HESX1 to control cell proliferation through Wnt/beta-catenin pathway. Plays a role in eye development by suppressing WNT1 expression and in dorsal-ventral patterning by repressing BMP signaling pathway. The sequence is that of Homeobox protein SIX3 (Six3) from Mus musculus (Mouse).